The following is a 268-amino-acid chain: Microtubule-associated protein RP/EB family member 1 (268 aa).

Residue alanine 2 is modified to N-acetylalanine. Residues asparagine 14 to aspartate 116 enclose the Calponin-homology (CH) domain. At lysine 66 the chain carries N6-crotonyllysine. Tyrosine 124 carries the post-translational modification Phosphotyrosine. The segment at tyrosine 124–tyrosine 268 is interaction with MTUS2/TIP150. A disordered region spans residues leucine 146–valine 180. A compositionally biased stretch (polar residues) spans glycine 154–threonine 170. Residue serine 155 is modified to Phosphoserine. Residues glycine 185–isoleucine 255 enclose the EB1 C-terminal domain. The interaction with APC stretch occupies residues threonine 206 to glutamate 211. Residues glutamate 208–tyrosine 268 are DCTN1-binding. Lysine 220 is modified (N6-acetyllysine). The interval lysine 220–isoleucine 242 is APC-binding. Positions glutamate 232 to isoleucine 255 are interaction with SKA1.

This sequence belongs to the MAPRE family. In terms of assembly, homodimer. Heterodimer with MAPRE3. Interacts (via C-terminal residues 206-211) with APC (via C-terminal residues 2674-2845); the interaction inhibits association with and bundling of F-actin. Interacts with DCTN1, DIAPH1 and DIAPH2. Interacts with DCTN2, TERF1 and dynein intermediate chain. Interacts with CLASP2, DST, KIF2C and STIM1; probably required for their targeting to the growing microtubule plus ends. Interacts with MTUS2; interaction is direct and probably targets MTUS2 to microtubules. Interacts (via C-terminus) with SKA1 (via SXIP motif); the interaction is direct and stabilizes the kinetochore-microtubule attachment of the SKA1 complex. Interacts with APC2. Interacts with CLASP1. Interacts (via C-terminus) with CLIP1. Interacts with SLAIN2 and SLAIN1. Interacts with MACF1. Interacts with KIF18B; this interaction is required for efficient accumulation of KIF18B at microtubule plus ends. Interacts with MISP. Interacts with RABL2/RABL2A; binds preferentially to GTP-bound RABL2. Interacts with KCNAB2. Interacts with KNSTRN. Interacts with NCKAP5L. Interacts with AKAP9. Interacts with PDE4DIP isoform 2/MMG8/SMYLE; this interaction is required for its recruitment to the Golgi apparatus. May form a pericentrosomal complex with AKAP9, CDK5RAP2 and PDE4DIP isoform 2/MMG8/SMYLE; within this complex, MAPRE1 binding to CDK5RAP2 may be mediated by PDE4DIP. Contrary to other mammalian species, does not interact with CDK5RAP2, possibly due to the lack of conservation of the MAPRE1-binding motif in mouse CDK5RAP2. Interacts with AKNA. Interacts with GAS2L1, GAS2L2, and GAS2L3. Interacts with RARRES1 and AGBL2. Post-translationally, acetylation at Lys-220 by KAT2B/PCAF promotes dynamic kinetochore-microtubule interactions in early mitosis. In terms of processing, crotonylated by KAT5 during mitosis, promoting astral microtubule plasticity and dynamic connection between astral microtubules and the cortex during mitotic chromosome segregation, thereby ensuring accurate spindle positioning in mitosis. Decrotonylated by HDAC3. As to expression, expressed within the midpiece of sperm tail (at protein level).

It localises to the cytoplasm. The protein localises to the cytoskeleton. The protein resides in the microtubule organizing center. It is found in the centrosome. Its subcellular location is the spindle. It localises to the spindle pole. Functionally, plus-end tracking protein (+TIP) that binds to the plus-end of microtubules and regulates the dynamics of the microtubule cytoskeleton. Recruits other +TIP proteins to microtubules by binding to a conserved Ser-X-Leu-Pro (SXLP) motif in their polypeptide chains. Promotes cytoplasmic microtubule nucleation and elongation. Involved in mitotic spindle positioning by stabilizing microtubules and promoting dynamic connection between astral microtubules and the cortex during mitotic chromosome segregation. Assists chromosome alignment in metaphase by recruiting the SKA complex to the spindle and stabilizing its interactions with microtubule bundles (K-fibers). Also acts as a regulator of minus-end microtubule organization: interacts with the complex formed by AKAP9 and PDE4DIP, leading to recruit CAMSAP2 to the Golgi apparatus, thereby tethering non-centrosomal minus-end microtubules to the Golgi, an important step for polarized cell movement. Promotes elongation of CAMSAP2-decorated microtubule stretches on the minus-end of microtubules. Acts as a regulator of autophagosome transport via interaction with CAMSAP2. Functions downstream of Rho GTPases and DIAPH1 in stable microtubule formation. May play a role in cell migration. The sequence is that of Microtubule-associated protein RP/EB family member 1 (Mapre1) from Mus musculus (Mouse).